A 379-amino-acid chain; its full sequence is 3-dehydroquinate synthase (379 aa).

NAD(+) contacts are provided by residues 113-117, 137-138, K150, and K159; these read GVIGD and TS. Zn(2+)-binding residues include E192, H256, and H274.

This sequence belongs to the sugar phosphate cyclases superfamily. Dehydroquinate synthase family. The cofactor is Co(2+). Requires Zn(2+) as cofactor. NAD(+) is required as a cofactor.

It localises to the cytoplasm. The enzyme catalyses 7-phospho-2-dehydro-3-deoxy-D-arabino-heptonate = 3-dehydroquinate + phosphate. It functions in the pathway metabolic intermediate biosynthesis; chorismate biosynthesis; chorismate from D-erythrose 4-phosphate and phosphoenolpyruvate: step 2/7. In terms of biological role, catalyzes the conversion of 3-deoxy-D-arabino-heptulosonate 7-phosphate (DAHP) to dehydroquinate (DHQ). The polypeptide is 3-dehydroquinate synthase (Zymomonas mobilis subsp. mobilis (strain ATCC 31821 / ZM4 / CP4)).